A 577-amino-acid polypeptide reads, in one-letter code: Arginine--tRNA ligase (577 aa).

The short motif at 122-132 (PNVAKEMHVGH) is the 'HIGH' region element.

It belongs to the class-I aminoacyl-tRNA synthetase family. Monomer.

The protein localises to the cytoplasm. The catalysed reaction is tRNA(Arg) + L-arginine + ATP = L-arginyl-tRNA(Arg) + AMP + diphosphate. In Edwardsiella ictaluri (strain 93-146), this protein is Arginine--tRNA ligase.